A 1010-amino-acid polypeptide reads, in one-letter code: Phosphatidylserine decarboxylase proenzyme 2 (1010 aa).

2 C2 domains span residues 1 to 114 (MSQA…SSWE) and 247 to 370 (DFES…DKPC). The Ca(2+) site is built by Asp-342, Ser-345, and Asp-348. In terms of domain architecture, EF-hand spans 458–493 (LRRQLWMHLLQGNDTQMKGTLDLIELNYFVDCLGSN). Active-site charge relay system; for autoendoproteolytic cleavage activity residues include Asp-734, His-793, and Ser-880. Ser-880 (schiff-base intermediate with substrate; via pyruvic acid; for decarboxylase activity) is an active-site residue. Position 880 is a pyruvic acid (Ser); by autocatalysis (Ser-880).

It belongs to the phosphatidylserine decarboxylase family. PSD-B subfamily. Eukaryotic type II sub-subfamily. Heterodimer of a large membrane-associated beta subunit and a small pyruvoyl-containing alpha subunit. Interacts with pstB2. This interaction may be a means to structurally tether the donor membrane (ER) harboring PstB2 to acceptor membranes (Golgi/endosomes) harboring PSD2 during PtdSer transport to the site of PtdEtn synthesis. Pyruvate serves as cofactor. The cofactor is Ca(2+). In terms of processing, is synthesized initially as an inactive proenzyme. Formation of the active enzyme involves a self-maturation process in which the active site pyruvoyl group is generated from an internal serine residue via an autocatalytic post-translational modification. Two non-identical subunits are generated from the proenzyme in this reaction, and the pyruvate is formed at the N-terminus of the alpha chain, which is derived from the carboxyl end of the proenzyme. The autoendoproteolytic cleavage occurs by a canonical serine protease mechanism, in which the side chain hydroxyl group of the serine supplies its oxygen atom to form the C-terminus of the beta chain, while the remainder of the serine residue undergoes an oxidative deamination to produce ammonia and the pyruvoyl prosthetic group on the alpha chain. During this reaction, the Ser that is part of the protease active site of the proenzyme becomes the pyruvoyl prosthetic group, which constitutes an essential element of the active site of the mature decarboxylase.

Its subcellular location is the golgi apparatus membrane. It is found in the endosome membrane. The catalysed reaction is a 1,2-diacyl-sn-glycero-3-phospho-L-serine + H(+) = a 1,2-diacyl-sn-glycero-3-phosphoethanolamine + CO2. The protein operates within phospholipid metabolism; phosphatidylethanolamine biosynthesis; phosphatidylethanolamine from CDP-diacylglycerol: step 2/2. Functionally, catalyzes the formation of phosphatidylethanolamine (PtdEtn) from phosphatidylserine (PtdSer). Plays a central role in phospholipid metabolism and in the interorganelle trafficking of phosphatidylserine. In Komagataella phaffii (strain GS115 / ATCC 20864) (Yeast), this protein is Phosphatidylserine decarboxylase proenzyme 2.